Here is a 92-residue protein sequence, read N- to C-terminus: 11 kDa excretory-secretory protein (92 aa).

In Trichostrongylus colubriformis (Black scour worm), this protein is 11 kDa excretory-secretory protein.